A 162-amino-acid polypeptide reads, in one-letter code: Cyanate hydratase (162 aa).

Residues arginine 103, glutamate 106, and serine 129 contribute to the active site.

It belongs to the cyanase family.

It carries out the reaction cyanate + hydrogencarbonate + 3 H(+) = NH4(+) + 2 CO2. Catalyzes the reaction of cyanate with bicarbonate to produce ammonia and carbon dioxide. This chain is Cyanate hydratase, found in Phaeosphaeria nodorum (strain SN15 / ATCC MYA-4574 / FGSC 10173) (Glume blotch fungus).